We begin with the raw amino-acid sequence, 158 residues long: MRSIAGLDKLKMEIFNVEELINMKPFKNMNKITINQKDNCILANRCFVKIDTPRYIPSTSISSSNIIRIRNHDFTLSELLYSPFHFQQPQFQYLLPGFVLTCIDKVSKQQKECKYCISNRGDDDSLSINIFIPTINKSIYIIIGLRMKNFWKPKFEIE.

This sequence belongs to the orthopoxvirus OPG058 family.

This chain is Protein OPG060 (OPG060), found in Cynomys gunnisoni (Gunnison's prairie dog).